The following is a 222-amino-acid chain: MDFLTSELLGVEETLQLTSELTNRESIWLDGRLTAGEHAALVKHNRQLDPSLPLARSIAEIVEQKIIDSPLLKSFALIRRVHSILISRSEVGDGYGWHVDNPFSKHGRRDLSFTLFLSDLSDYEGGELTFQLLQGSKEIRLPAGQIILYPSSSLHCVQPISSGVRLVCVGWIESYIQSTEDRSLLFNLDAGAKGLLARHGRSDELDLIFQAYANAVRRLSGR.

One can recognise a Fe2OG dioxygenase domain in the interval 80 to 174; the sequence is RVHSILISRS…RLVCVGWIES (95 aa). Fe cation-binding residues include His-98, Asp-100, and His-155. Residue Arg-165 participates in 2-oxoglutarate binding.

Fe(2+) is required as a cofactor. It depends on L-ascorbate as a cofactor.

This Synechococcus sp. (strain CC9902) protein is PKHD-type hydroxylase Syncc9902_2001.